The primary structure comprises 161 residues: 3-isopropylmalate dehydratase small subunit (161 aa).

It belongs to the LeuD family. LeuD type 2 subfamily. As to quaternary structure, heterodimer of LeuC and LeuD.

It carries out the reaction (2R,3S)-3-isopropylmalate = (2S)-2-isopropylmalate. It functions in the pathway amino-acid biosynthesis; L-leucine biosynthesis; L-leucine from 3-methyl-2-oxobutanoate: step 2/4. Catalyzes the isomerization between 2-isopropylmalate and 3-isopropylmalate, via the formation of 2-isopropylmaleate. The chain is 3-isopropylmalate dehydratase small subunit from Clostridium botulinum (strain Eklund 17B / Type B).